We begin with the raw amino-acid sequence, 145 residues long: Protein BUD31 homolog 2 (145 aa).

It belongs to the BUD31 (G10) family.

The protein resides in the nucleus. The protein is Protein BUD31 homolog 2 of Oryza sativa subsp. japonica (Rice).